The chain runs to 172 residues: uncharacterized protein (172 aa).

This is an uncharacterized protein from Agrobacterium tumefaciens (strain Ach5).